The primary structure comprises 324 residues: 33 kDa ribonucleoprotein, chloroplastic (324 aa).

The N-terminal 71 residues, 1–71 (MSGCCFSFAA…YRSSIFLSTC (71 aa)), are a transit peptide targeting the chloroplast. 2 RRM domains span residues 114–192 (GRLY…FPEV) and 217–296 (HKLY…AGQK). Residues 294–324 (GQKAPVSSPPVVETSPENDSDNSELLSSLSS) are disordered. Residues 298-308 (PVSSPPVVETS) show a composition bias toward low complexity.

It is found in the plastid. The protein resides in the chloroplast. Could be involved in splicing and/or processing of chloroplast RNA's. The polypeptide is 33 kDa ribonucleoprotein, chloroplastic (Nicotiana sylvestris (Wood tobacco)).